Here is a 163-residue protein sequence, read N- to C-terminus: NADH-quinone oxidoreductase subunit B (163 aa).

Positions 32, 33, 98, and 127 each coordinate [4Fe-4S] cluster.

It belongs to the complex I 20 kDa subunit family. In terms of assembly, NDH-1 is composed of 14 different subunits. Subunits NuoB, C, D, E, F, and G constitute the peripheral sector of the complex. Requires [4Fe-4S] cluster as cofactor.

The protein resides in the cell inner membrane. The catalysed reaction is a quinone + NADH + 5 H(+)(in) = a quinol + NAD(+) + 4 H(+)(out). In terms of biological role, NDH-1 shuttles electrons from NADH, via FMN and iron-sulfur (Fe-S) centers, to quinones in the respiratory chain. Couples the redox reaction to proton translocation (for every two electrons transferred, four hydrogen ions are translocated across the cytoplasmic membrane), and thus conserves the redox energy in a proton gradient. In Pelobacter propionicus (strain DSM 2379 / NBRC 103807 / OttBd1), this protein is NADH-quinone oxidoreductase subunit B.